A 101-amino-acid polypeptide reads, in one-letter code: uncharacterized protein (101 aa).

This is an uncharacterized protein from Methanocaldococcus jannaschii (strain ATCC 43067 / DSM 2661 / JAL-1 / JCM 10045 / NBRC 100440) (Methanococcus jannaschii).